The sequence spans 180 residues: MSRQAGRGTESKKMNSELFTLTYGALVTQLCKDYENDEDVNKQLDKMGYNIGVRLIEDFLARSNVGRCHDFRETADVIAKIAFKMYLGITPSITNWSPGGDEFSLILENNPLVDFVELPDNHSSLIYSNLLCGVLRGALEMVQMAVDVKFVQDTLKGDSVTEIRMKFIRRIEDNLPAGEE.

Cys-68 is lipidated: S-palmitoyl cysteine.

It belongs to the TRAPP small subunits family. BET3 subfamily. In terms of assembly, homodimer. Part of the multisubunit TRAPP (transport protein particle) complex.

It localises to the golgi apparatus. The protein localises to the cis-Golgi network. The protein resides in the endoplasmic reticulum. May play a role in vesicular transport from endoplasmic reticulum to Golgi. The chain is Trafficking protein particle complex subunit 3 (TRAPPC3) from Gallus gallus (Chicken).